We begin with the raw amino-acid sequence, 284 residues long: Diaminopimelate epimerase (284 aa).

The substrate site is built by Asn21, Gln54, and Asn74. Residue Cys83 is the Proton donor of the active site. Residues 84–85 (GN), Asn167, Asn200, and 218–219 (ER) each bind substrate. The active-site Proton acceptor is the Cys227. A substrate-binding site is contributed by 228–229 (GS).

The protein belongs to the diaminopimelate epimerase family. As to quaternary structure, homodimer.

It localises to the cytoplasm. The catalysed reaction is (2S,6S)-2,6-diaminopimelate = meso-2,6-diaminopimelate. It participates in amino-acid biosynthesis; L-lysine biosynthesis via DAP pathway; DL-2,6-diaminopimelate from LL-2,6-diaminopimelate: step 1/1. Catalyzes the stereoinversion of LL-2,6-diaminopimelate (L,L-DAP) to meso-diaminopimelate (meso-DAP), a precursor of L-lysine and an essential component of the bacterial peptidoglycan. The sequence is that of Diaminopimelate epimerase from Buchnera aphidicola subsp. Acyrthosiphon pisum (strain 5A).